The primary structure comprises 506 residues: Xaa-Pro aminopeptidase 3 (506 aa).

The transit peptide at 1–31 (MLSLLSTPRLVPVIARLRGLSGCMSCLQRRY) directs the protein to the mitochondrion. Residues 54-79 (HPHLLRPGEVTPGLSQVEYALRRHKL) are interaction with TNFRSF1B. Substrate is bound by residues Tyr-300, Asp-331, Asp-342, His-423, His-430, Glu-450, and Glu-474. Mn(2+)-binding residues include Asp-331, Asp-342, and His-423. The Mn(2+) site is built by Glu-450 and Glu-474.

It belongs to the peptidase M24B family. In terms of assembly, homodimer. Interacts with TNFRSF1B/TNFR2 (activated) and TRAF2. The cofactor is Mn(2+). As to expression, expressed in the kidney, specifically in intercalated cells, but not in principal cells, of the distal convoluted tubule and cortical collecting duct (at protein level).

It localises to the mitochondrion. The protein localises to the cytoplasm. The catalysed reaction is Release of any N-terminal amino acid, including proline, that is linked to proline, even from a dipeptide or tripeptide.. Catalyzes the removal of a penultimate prolyl residue from the N-termini of peptides, such as Leu-Pro-Ala. Also shows low activity towards peptides with Ala or Ser at the P1 position. Promotes TNFRSF1B-mediated phosphorylation of MAPK8/JNK1 and MAPK9/JNK2, suggesting a function as an adapter protein for TNFRSF1B; the effect is independent of XPNPEP3 peptidase activity. May inhibit apoptotic cell death induced via TNF-TNFRSF1B signaling. This chain is Xaa-Pro aminopeptidase 3 (Xpnpep3), found in Rattus norvegicus (Rat).